We begin with the raw amino-acid sequence, 139 residues long: Cytochrome c-551 (139 aa).

A signal peptide spans 1–20 (MTRTLAVVLAMTFSAAPVFA). Residues cysteine 34, cysteine 37, histidine 38, and methionine 116 each contribute to the heme c site.

This sequence belongs to the cytochrome c family. Binds 1 heme c group covalently per subunit.

This Roseobacter denitrificans (strain ATCC 33942 / OCh 114) (Erythrobacter sp. (strain OCh 114)) protein is Cytochrome c-551.